Reading from the N-terminus, the 315-residue chain is Ribose-phosphate pyrophosphokinase (315 aa).

Residues 37-39 (DGE) and 96-97 (RQ) each bind ATP. Mg(2+)-binding residues include histidine 131 and aspartate 170. Lysine 194 is an active-site residue. D-ribose 5-phosphate contacts are provided by residues arginine 196, aspartate 220, and 224–228 (DTGGT).

This sequence belongs to the ribose-phosphate pyrophosphokinase family. Class I subfamily. In terms of assembly, homohexamer. Mg(2+) serves as cofactor.

It is found in the cytoplasm. The catalysed reaction is D-ribose 5-phosphate + ATP = 5-phospho-alpha-D-ribose 1-diphosphate + AMP + H(+). The protein operates within metabolic intermediate biosynthesis; 5-phospho-alpha-D-ribose 1-diphosphate biosynthesis; 5-phospho-alpha-D-ribose 1-diphosphate from D-ribose 5-phosphate (route I): step 1/1. Functionally, involved in the biosynthesis of the central metabolite phospho-alpha-D-ribosyl-1-pyrophosphate (PRPP) via the transfer of pyrophosphoryl group from ATP to 1-hydroxyl of ribose-5-phosphate (Rib-5-P). This chain is Ribose-phosphate pyrophosphokinase, found in Buchnera aphidicola subsp. Acyrthosiphon pisum (strain APS) (Acyrthosiphon pisum symbiotic bacterium).